Consider the following 138-residue polypeptide: Large ribosomal subunit protein uL16 (138 aa).

The segment covering 1–17 has biased composition (basic residues); it reads MLIPRKVKHRKQHHPRQ. A disordered region spans residues 1-22; the sequence is MLIPRKVKHRKQHHPRQRGIAS.

The protein belongs to the universal ribosomal protein uL16 family. As to quaternary structure, part of the 50S ribosomal subunit.

Functionally, binds 23S rRNA and is also seen to make contacts with the A and possibly P site tRNAs. The polypeptide is Large ribosomal subunit protein uL16 (Mycobacterium tuberculosis (strain ATCC 25177 / H37Ra)).